The primary structure comprises 705 residues: Ribosomal RNA large subunit methyltransferase K/L (705 aa).

The THUMP domain maps to 43–154 (VVYRCCLWSR…GEKGILGFDL (112 aa)).

This sequence belongs to the methyltransferase superfamily. RlmKL family.

The protein localises to the cytoplasm. It carries out the reaction guanosine(2445) in 23S rRNA + S-adenosyl-L-methionine = N(2)-methylguanosine(2445) in 23S rRNA + S-adenosyl-L-homocysteine + H(+). The enzyme catalyses guanosine(2069) in 23S rRNA + S-adenosyl-L-methionine = N(2)-methylguanosine(2069) in 23S rRNA + S-adenosyl-L-homocysteine + H(+). Specifically methylates the guanine in position 2445 (m2G2445) and the guanine in position 2069 (m7G2069) of 23S rRNA. This Aliivibrio fischeri (strain MJ11) (Vibrio fischeri) protein is Ribosomal RNA large subunit methyltransferase K/L.